The primary structure comprises 206 residues: Translation initiation factor IF-3 (206 aa).

The protein belongs to the IF-3 family. As to quaternary structure, monomer.

It localises to the cytoplasm. In terms of biological role, IF-3 binds to the 30S ribosomal subunit and shifts the equilibrium between 70S ribosomes and their 50S and 30S subunits in favor of the free subunits, thus enhancing the availability of 30S subunits on which protein synthesis initiation begins. The sequence is that of Translation initiation factor IF-3 from Shigella flexneri.